The primary structure comprises 271 residues: 2-dehydro-3-deoxyphosphooctonate aldolase (271 aa).

The protein belongs to the KdsA family.

It is found in the cytoplasm. The enzyme catalyses D-arabinose 5-phosphate + phosphoenolpyruvate + H2O = 3-deoxy-alpha-D-manno-2-octulosonate-8-phosphate + phosphate. The protein operates within carbohydrate biosynthesis; 3-deoxy-D-manno-octulosonate biosynthesis; 3-deoxy-D-manno-octulosonate from D-ribulose 5-phosphate: step 2/3. It participates in bacterial outer membrane biogenesis; lipopolysaccharide biosynthesis. The protein is 2-dehydro-3-deoxyphosphooctonate aldolase of Campylobacter jejuni subsp. jejuni serotype O:6 (strain 81116 / NCTC 11828).